The following is a 315-amino-acid chain: Homoserine kinase (315 aa).

97-107 (PPARGLGSSAT) is a binding site for ATP.

This sequence belongs to the GHMP kinase family. Homoserine kinase subfamily.

The protein localises to the cytoplasm. It catalyses the reaction L-homoserine + ATP = O-phospho-L-homoserine + ADP + H(+). It functions in the pathway amino-acid biosynthesis; L-threonine biosynthesis; L-threonine from L-aspartate: step 4/5. In terms of biological role, catalyzes the ATP-dependent phosphorylation of L-homoserine to L-homoserine phosphate. The polypeptide is Homoserine kinase (Prochlorococcus marinus (strain MIT 9515)).